A 137-amino-acid polypeptide reads, in one-letter code: Acidic phospholipase A2 beta-bungarotoxin A6 chain (137 aa).

The N-terminal stretch at 1-9 is a signal peptide; the sequence is AVCVSLLGA. Residues 10 to 17 constitute a propeptide that is removed on maturation; the sequence is ANIPPQHL. Cystine bridges form between C44/C136, C46/C62, C61/C117, C68/C110, C78/C103, and C96/C108. Ca(2+) is bound by residues Y45, G47, and G49. The active site involves H65. D66 is a Ca(2+) binding site. The active site involves D111.

This sequence belongs to the phospholipase A2 family. Group I subfamily. D49 sub-subfamily. In terms of assembly, heterodimer; disulfide-linked. The A chains have phospholipase A2 activity and the B chains show homology with the basic protease inhibitors. The cofactor is Ca(2+). In terms of tissue distribution, expressed by the venom gland.

The protein resides in the secreted. The enzyme catalyses a 1,2-diacyl-sn-glycero-3-phosphocholine + H2O = a 1-acyl-sn-glycero-3-phosphocholine + a fatty acid + H(+). Functionally, snake venom phospholipase A2 (PLA2) that inhibits neuromuscular transmission by blocking acetylcholine release from the nerve termini. PLA2 catalyzes the calcium-dependent hydrolysis of the 2-acyl groups in 3-sn-phosphoglycerides. The protein is Acidic phospholipase A2 beta-bungarotoxin A6 chain of Bungarus multicinctus (Many-banded krait).